A 538-amino-acid polypeptide reads, in one-letter code: MNLELLESFGQNYPEEADGTLDCISMALTCTFNRWGTLLAVGCNDGRIVIWDFLTRGIAKIISAHIHPVCSLCWSRDGHKLVSASTDNIVSQWDVLSGDCDQRFRFPSPILKVQYHPRDQNKVLVCPMKSAPVMLTLSDSKHVVLPVDDDSDLNVVASFDRRGEYIYTGNAKGKILVLKTDSQDLVASFRVTTGTSNTTAIKSIEFARKGSCFLINTADRIIRVYDGREILTCGRDGEPEPMQKLQDLVNRTPWKKCCFSGDGEYIVAGSARQHALYIWEKSIGNLVKILHGTRGELLLDVAWHPVRPIIASISSGVVSIWAQNQVENWSAFAPDFKELDENVEYEERESEFDIEDEDKSEPEQTGADAAEDEEVDVTSVDPIAAFCSSDEELEDSKALLYLPIAPEVEDPEENPYGPPPDAVPSSLMDEGASSEKKRQSSADGSQPPKKKPKTTNIELQGVPNDEVHPLLGVKGDGKSKKKQAGRPKGSKGKEKDSPFKPKLYKGDRGLPLEGSTKGKVQAELSQSLAAGGAISELL.

WD repeat units lie at residues Asp22–Ser63 and Ala64–Arg103. A Glycyl lysine isopeptide (Lys-Gly) (interchain with G-Cter in SUMO2) cross-link involves residue Lys129. 4 WD repeats span residues Asp148–Ser188, Ser196–Arg235, Val249–His291, and Thr293–Ala331. Thr252 is modified (phosphothreonine; by CDK1). Residues Ser330 to Gly366 form an interaction with ASH2L region. The span at Glu344–Ser360 shows a compositional bias: acidic residues. Residues Glu344–Val377 form a disordered region. Ser350 is modified (phosphoserine). The interaction with WDR5 stretch occupies residues Glu371 to Val380. Residues Ser388 and Ser389 each carry the phosphoserine modification. The disordered stretch occupies residues Val408–Lys519. The segment covering Ser479–Ser490 has biased composition (basic residues). Over residues Lys491–Leu510 the composition is skewed to basic and acidic residues. Residue Ser497 is modified to Phosphoserine; by CDK1. A Phosphoserine modification is found at Ser525.

As to quaternary structure, component of the SET1 complex, at least composed of the catalytic subunit (SETD1A or SETD1B), WDR5, WDR82, RBBP5, ASH2L/ASH2, CXXC1/CFP1, HCFC1 and DPY30. Core component of several methyltransferase-containing complexes including MLL1/MLL, MLL2/3 (also named ASCOM complex) and MLL4/WBP7. Each complex is at least composed of ASH2L, RBBP5, WDR5, DPY30, one or more specific histone methyltransferases (KMT2A/MLL1, KMT2D/MLL2, KMT2C/MLL3 and KMT2B/MLL4), and the facultative components PAGR1, BACC1, CHD8, E2F6, HCFC1, HCFC2, HSP70, INO80C, KDM6A, KANSL1, LAS1L, MAX, MCRS1, MEN1, MGA, MYST1/MOF, NCOA6, PAXIP1/PTIP, PELP1, PHF20, PRP31, RING2, RUVB1/TIP49A, RUVB2/TIP49B, SENP3, TAF1, TAF4, TAF6, TAF7, TAF9, TEX10 and alpha- and beta-tubulin. Component of a histone methylation complex composed of at least ZNF335, RBBP5, ASH2L and WDR5; the complex may have histone H3-specific methyltransferase activity, however does not have specificity for 'Lys-4' of histone H3. Interacts with ZNF335. Interacts with ASH2L; the interaction is direct. Interacts with WDR5; the interaction is direct. Components of the ZNF335-RBBP5-ASH2L-WDR5 histone methylation complex may associate with components of a nuclear receptor-mediated transcription complex to form a complex at least composed of ZNF335, HCFC1, CCAR2, EMSY, MKI67, RBBP5, ASH2L and WDR5. Within this complex interacts with EMSY. Found in a complex with RBBP5, ASH2L, DPY30, KMT2A, KMT2D and WDR5. Interacts with SETD1A. Interacts with WDR82.

The protein localises to the nucleus. In terms of biological role, in embryonic stem (ES) cells, plays a crucial role in the differentiation potential, particularly along the neural lineage, regulating gene induction and H3 'Lys-4' methylation at key developmental loci, including that mediated by retinoic acid. Does not affect ES cell self-renewal. Component or associated component of some histone methyltransferase complexes which regulates transcription through recruitment of those complexes to gene promoters. As part of the MLL1/MLL complex, involved in mono-, di- and trimethylation at 'Lys-4' of histone H3. Histone H3 'Lys-4' methylation represents a specific tag for epigenetic transcriptional activation. In association with ASH2L and WDR5, stimulates the histone methyltransferase activities of KMT2A, KMT2B, KMT2C, KMT2D, SETD1A and SETD1B. This is Retinoblastoma-binding protein 5 (Rbbp5) from Mus musculus (Mouse).